The chain runs to 122 residues: Large ribosomal subunit protein uL18 (122 aa).

Positions 1 to 24 are disordered; it reads MLKKADKNANRLQRHKRVRRKISG. The span at 12-22 shows a compositional bias: basic residues; sequence LQRHKRVRRKI.

Belongs to the universal ribosomal protein uL18 family. Part of the 50S ribosomal subunit; part of the 5S rRNA/L5/L18/L25 subcomplex. Contacts the 5S and 23S rRNAs.

This is one of the proteins that bind and probably mediate the attachment of the 5S RNA into the large ribosomal subunit, where it forms part of the central protuberance. The polypeptide is Large ribosomal subunit protein uL18 (Clostridioides difficile (strain 630) (Peptoclostridium difficile)).